The sequence spans 410 residues: Cytohesin-2 (410 aa).

The stretch at 13-56 forms a coiled coil; it reads PEERMELENIRRRKQELLVEIQRLREELSEAMSEVEGLEANEGS. An SEC7 domain is found at 54 to 241; the sequence is EGSKTLQRNR…RNLYDSIRNE (188 aa). Residues 259-386 enclose the PH domain; sequence NPDREGWLLK…WIKSIQAAVS (128 aa). Residues 268–271, arginine 290, tyrosine 301, arginine 311, lysine 349, asparagine 360, and histidine 361 contribute to the a 1,2-diacyl-sn-glycero-3-phospho-(1D-myo-inositol-3,4,5-trisphosphate) site; that span reads KLGA. Residues 397 to 405 form a C-terminal autoinhibitory region region; the sequence is RKKRISVKK.

Heteromer. Composed of TAMALIN, CYTH2 and at least one GRM1. Interacts with ARRB1. Interacts with ARL4D; the interaction is direct. Directly interacts with CCDC120 through the coiled coil domain; this interaction stabilizes CCDC120, possibly by preventing its ubiquitination, and is required for neurite growth in neuroblastoma cells. Interacts (via N-terminal domain) with INAVA (via N-terminal domain).

It localises to the cell membrane. The protein localises to the cytoplasm. Its subcellular location is the cell projection. The protein resides in the growth cone. Acts as a guanine-nucleotide exchange factor (GEF). Promotes guanine-nucleotide exchange on ARF1, ARF3 and ARF6. Promotes the activation of ARF factors through replacement of GDP with GTP. The cell membrane form, in association with ARL4 proteins, recruits ARF6 to the plasma membrane. Involved in neurite growth. The sequence is that of Cytohesin-2 (CYTH2) from Bos taurus (Bovine).